The chain runs to 90 residues: DNA-directed RNA polymerase subunit omega (90 aa).

The segment at 69–90 (RQEQQEQEAAELAAVSSIAHNR) is disordered.

It belongs to the RNA polymerase subunit omega family. As to quaternary structure, the RNAP catalytic core consists of 2 alpha, 1 beta, 1 beta' and 1 omega subunit. When a sigma factor is associated with the core the holoenzyme is formed, which can initiate transcription.

It catalyses the reaction RNA(n) + a ribonucleoside 5'-triphosphate = RNA(n+1) + diphosphate. In terms of biological role, promotes RNA polymerase assembly. Latches the N- and C-terminal regions of the beta' subunit thereby facilitating its interaction with the beta and alpha subunits. The sequence is that of DNA-directed RNA polymerase subunit omega from Vibrio parahaemolyticus serotype O3:K6 (strain RIMD 2210633).